Consider the following 3753-residue polypeptide: Intermembrane lipid transfer protein VPS13C (3753 aa).

The 114-residue stretch at 3-116 (LESVVADLLN…LQDVKQKELS (114 aa)) folds into the Chorein N-terminal domain. A Phosphoserine modification is found at serine 132. Basic residues predominate over residues 150-164 (GRKRKKHKKHFKKPF). The disordered stretch occupies residues 150–176 (GRKRKKHKKHFKKPFKGLDRSKDKPKE). Positions 165-176 (KGLDRSKDKPKE) are enriched in basic and acidic residues. At threonine 614 the chain carries Phosphothreonine. Serine 619 is subject to Phosphoserine. Threonine 624 carries the post-translational modification Phosphothreonine. A phosphoserine mark is found at serine 737, serine 842, serine 872, and serine 874. Residues 877–883 (EYFDAED) carry the FFAT motif. Phosphoserine occurs at positions 1979 and 2473. Positions 2415-3309 (DYSLKDRAPF…IQQDIDALNA (895 aa)) are required for late endosome/lysosome localization. In terms of domain architecture, SHR-BD spans 2766–3016 (LSVFSPYWLI…RLFAWADPTG (251 aa)). The interval 3310-3753 (ELMETSMTDM…VRLLRPQLPS (444 aa)) is required for lipid droplet localization. Arginine 3519 and arginine 3526 each carry omega-N-methylarginine. Lysine 3538 carries the N6-acetyllysine modification. Serine 3641 carries the post-translational modification Phosphoserine.

This sequence belongs to the VPS13 family. Widely expressed.

The protein resides in the mitochondrion outer membrane. The protein localises to the lipid droplet. It is found in the endoplasmic reticulum membrane. Its subcellular location is the lysosome membrane. It localises to the late endosome membrane. Its function is as follows. Mediates the transfer of lipids between membranes at organelle contact sites. Necessary for proper mitochondrial function and maintenance of mitochondrial transmembrane potential. Involved in the regulation of PINK1/PRKN-mediated mitophagy in response to mitochondrial depolarization. This chain is Intermembrane lipid transfer protein VPS13C, found in Homo sapiens (Human).